Here is a 60-residue protein sequence, read N- to C-terminus: MLKVAVFDEEHEKDLQTEINSFLKGISEEQLIDIKYTVSAACDPDGEQLYCFSALILYRK.

This chain is Sporulation protein cse60 (cse60), found in Bacillus subtilis (strain 168).